We begin with the raw amino-acid sequence, 122 residues long: Sarcocystatin-A (122 aa).

The signal sequence occupies residues 1–20; sequence MKYVLILCVITLATVAYAQP. Q21 is modified (pyrrolidone carboxylic acid). A Secondary area of contact motif is present at residues 67–71; it reads QVVSG.

It belongs to the cystatin family.

Selectively inhibits the activity of cysteine proteinase of hemocytes, protecting developing adult tissue in pupae from attack by the proteinase. This chain is Sarcocystatin-A, found in Sarcophaga peregrina (Flesh fly).